The following is a 444-amino-acid chain: E1B 55 kDa protein (444 aa).

Positions 1–27 are disordered; sequence MEQDSDLESGRATNQRPPRVRVRGAGV. Phosphoserine occurs at positions 438 and 439.

This sequence belongs to the adenoviridae E1B 55 kDa protein family. As to quaternary structure, interacts with host PML-4 and PML-5; this interaction promotes efficient subnuclear targeting of E1B-55K to PML nuclear bodies. Interacts with E4-ORF3 protein. Interacts with E4-ORF6 protein.

It localises to the host nucleus. The protein localises to the host cytoplasm. Its function is as follows. Plays a major role to prevent cellular inhibition of viral genome replication. Assembles an SCF-like E3 ubiquitin ligase complex based on the cellular proteins ELOB, ELOC, CUL5 and RBX1, in cooperation with viral E4orf6. This viral RING-type ligase ubiquitinates cellular substrates and targets them to proteasomal degradation: TP53/p53, LIG4, MRE11-RAD50-NBS1 (MRN) complex, ITGA3, DAXX and BLM. E1B-55K probably acts as the substrate-specific adapter of the SCF-like E3 ubiquitin ligase complex. Degradation of host TP53/p53 activity is essential for preventing E1A-induced TP53 accumulation that would otherwise lead to cell apoptosis and growth arrest. E1B-55K also inactivates TP53 transcription-factor activity by binding its transactivation domain. E1B-55K also functions as a SUMO1 E3 ligase for TP53 which causes the latter to be sequestered in promyelocytic leukemia (PML) nuclear bodies thereby contributing to maximal inhibition of TP53 function. The sequence is that of E1B 55 kDa protein from Canis lupus familiaris (Dog).